The sequence spans 308 residues: HTH-type transcriptional activator AllS (308 aa).

An HTH lysR-type domain is found at 2–59 (FDPETLRTFISVAETGSFSKAAERLCKTTATTSYRIKLLEENTGVGLFFRTTRSVSLT). The segment at residues 19–38 (FSKAAERLCKTTATTSYRIK) is a DNA-binding region (H-T-H motif).

It belongs to the LysR transcriptional regulatory family.

In terms of biological role, positive regulator essential for the expression of allD operon. Binds to the allD promoter. The protein is HTH-type transcriptional activator AllS (allS) of Salmonella typhi.